The chain runs to 196 residues: Ribonuclease HII (196 aa).

The RNase H type-2 domain occupies 9 to 196 (KLVAGVDEVG…KPVRHALGIE (188 aa)). A divalent metal cation contacts are provided by aspartate 15, glutamate 16, and aspartate 107.

Belongs to the RNase HII family. Mn(2+) serves as cofactor. Mg(2+) is required as a cofactor.

It is found in the cytoplasm. The catalysed reaction is Endonucleolytic cleavage to 5'-phosphomonoester.. Endonuclease that specifically degrades the RNA of RNA-DNA hybrids. The sequence is that of Ribonuclease HII from Aeromonas salmonicida (strain A449).